The chain runs to 172 residues: Ribosome maturation factor RimM (172 aa).

The region spanning 95–168 is the PRC barrel domain; the sequence is AEGEFYYHQI…RVDVEIMEGL (74 aa).

It belongs to the RimM family. Binds ribosomal protein uS19.

Its subcellular location is the cytoplasm. An accessory protein needed during the final step in the assembly of 30S ribosomal subunit, possibly for assembly of the head region. Essential for efficient processing of 16S rRNA. May be needed both before and after RbfA during the maturation of 16S rRNA. It has affinity for free ribosomal 30S subunits but not for 70S ribosomes. In Streptococcus equi subsp. equi (strain 4047), this protein is Ribosome maturation factor RimM.